Consider the following 202-residue polypeptide: Myosin regulatory light chain 10 (202 aa).

The segment at 1–21 (MGQSSLDHGVQGPVAGTGDFG) is disordered. EF-hand domains are found at residues 60-95 (SQIQEFKEAFTIMDQNRDGFIDKEDLRDTFAALGRI), 130-165 (DPEETILHAFKVFDTEGKGFVKADFIKEKLMTQADR), and 166-201 (FSEEEVKQMFAAFPPDVCGNLDYRNLCYVITHGEEK). Ca(2+)-binding residues include aspartate 73, asparagine 75, aspartate 77, and aspartate 84.

In terms of assembly, myosin is a hexamer of 2 heavy chains and 4 light chains. As to expression, specifically expressed in precursor B- and T-lymphocytes.

The chain is Myosin regulatory light chain 10 (Myl10) from Mus musculus (Mouse).